A 182-amino-acid polypeptide reads, in one-letter code: Peptide deformylase (182 aa).

Fe cation is bound by residues cysteine 110 and histidine 153. Glutamate 154 is an active-site residue. Fe cation is bound at residue histidine 157.

Belongs to the polypeptide deformylase family. It depends on Fe(2+) as a cofactor.

It catalyses the reaction N-terminal N-formyl-L-methionyl-[peptide] + H2O = N-terminal L-methionyl-[peptide] + formate. Removes the formyl group from the N-terminal Met of newly synthesized proteins. Requires at least a dipeptide for an efficient rate of reaction. N-terminal L-methionine is a prerequisite for activity but the enzyme has broad specificity at other positions. This Halalkalibacterium halodurans (strain ATCC BAA-125 / DSM 18197 / FERM 7344 / JCM 9153 / C-125) (Bacillus halodurans) protein is Peptide deformylase.